Consider the following 115-residue polypeptide: Large ribosomal subunit protein bL19 (115 aa).

The protein belongs to the bacterial ribosomal protein bL19 family.

Its function is as follows. This protein is located at the 30S-50S ribosomal subunit interface and may play a role in the structure and function of the aminoacyl-tRNA binding site. In Klebsiella pneumoniae (strain 342), this protein is Large ribosomal subunit protein bL19.